A 382-amino-acid chain; its full sequence is D-galactonate dehydratase (382 aa).

Position 183 (Asp183) interacts with Mg(2+). His185 acts as the Proton donor in catalysis. Mg(2+)-binding residues include Glu209 and Glu235. Catalysis depends on His285, which acts as the Proton acceptor.

The protein belongs to the mandelate racemase/muconate lactonizing enzyme family. GalD subfamily. The cofactor is Mg(2+).

The enzyme catalyses D-galactonate = 2-dehydro-3-deoxy-D-galactonate + H2O. It participates in carbohydrate acid metabolism; D-galactonate degradation; D-glyceraldehyde 3-phosphate and pyruvate from D-galactonate: step 1/3. Functionally, catalyzes the dehydration of D-galactonate to 2-keto-3-deoxy-D-galactonate. The chain is D-galactonate dehydratase from Xanthomonas campestris pv. campestris (strain 8004).